The following is a 302-amino-acid chain: Nucleotide-binding protein Bcep1808_2900 (302 aa).

8-15 provides a ligand contact to ATP; the sequence is GISGSGKS. 57-60 is a GTP binding site; that stretch reads DARS.

It belongs to the RapZ-like family.

Its function is as follows. Displays ATPase and GTPase activities. This chain is Nucleotide-binding protein Bcep1808_2900, found in Burkholderia vietnamiensis (strain G4 / LMG 22486) (Burkholderia cepacia (strain R1808)).